Consider the following 141-residue polypeptide: HTH-type transcriptional regulator LrpA (141 aa).

Residues 2–63 (IDERDKIILE…RINPKKLGYS (62 aa)) enclose the HTH asnC-type domain. Residues 21-40 (FTEIAKKLGISETAVRKRVK) constitute a DNA-binding region (H-T-H motif).

As to quaternary structure, homooctamer; tetramer of dimers.

In terms of biological role, DNA-binding protein that negatively regulates its own transcription. Interferes with RNA polymerase (RNAP) recruitment by inhibiting the association of RNAP with the TBP-TFB promoter complex. This is HTH-type transcriptional regulator LrpA (lrpA) from Pyrococcus horikoshii (strain ATCC 700860 / DSM 12428 / JCM 9974 / NBRC 100139 / OT-3).